The following is a 182-amino-acid chain: ATP synthase subunit delta, mitochondrial (182 aa).

Residues 1–17 (MFRTFGRRLVSCTLPLL) constitute a mitochondrion transit peptide.

The protein belongs to the ATPase epsilon chain family. In terms of assembly, F-type ATPases have 2 components, F(1) - the catalytic core - and F(o) - the membrane proton channel. F(1) has five subunits: alpha(3), beta(3), gamma(1), delta(1), epsilon(1), plus the additional subunit P18 (Tb427.05.1710) that is not present in F(1)F(o) ATP synthase from metazoa. Subunit P18 (Tb927.5.1710) interacts with the alpha subunit with a 1:1 stoichiometry; the interaction is direct. Subunit gamma is part of the central stalk. F(o) has three main subunits: a, b and c. The trypanosomal ATPase complex contains additional subunits that are not present in the F(1)F(o) ATP synthase from metazoa.

The protein resides in the mitochondrion. The protein localises to the mitochondrion inner membrane. Its function is as follows. Mitochondrial membrane ATP synthase (F(1)F(o) ATP synthase) produces ATP from ADP in the presence of a proton gradient across the membrane which is generated by electron transport complexes of the respiratory chain. F-type ATPases consist of two structural domains, F(1) - containing the extramembraneous catalytic core, and F(o) - containing the membrane proton channel, linked together by a central stalk and a peripheral stalk. During catalysis, ATP synthesis in the catalytic domain of F(1) is coupled via a rotary mechanism of the central stalk subunits to proton translocation. Subunits alpha and beta form the catalytic core in F(1). Rotation of the central stalk against the surrounding alpha(3)beta(3) subunits leads to hydrolysis of ATP in three separate catalytic sites on the beta subunits. Contrary to the procyclic, insect form that requires F(1)F(o) ATP synthase for ATP synthesis, the bloodstream form relies on ATP hydrolysis by F(1)F(o) ATP synthase to maintain its mitochondrial membrane potential. The protein is ATP synthase subunit delta, mitochondrial of Trypanosoma brucei brucei.